The chain runs to 421 residues: 3-phosphoshikimate 1-carboxyvinyltransferase (421 aa).

3-phosphoshikimate-binding residues include Lys19, Ser20, and Arg24. A phosphoenolpyruvate-binding site is contributed by Lys19. Phosphoenolpyruvate-binding residues include Gly88 and Arg116. Positions 160, 162, 307, and 334 each coordinate 3-phosphoshikimate. Residue Gln162 participates in phosphoenolpyruvate binding. The active-site Proton acceptor is the Asp307. Residues Arg338 and Arg380 each coordinate phosphoenolpyruvate.

The protein belongs to the EPSP synthase family. As to quaternary structure, monomer.

The protein resides in the cytoplasm. It catalyses the reaction 3-phosphoshikimate + phosphoenolpyruvate = 5-O-(1-carboxyvinyl)-3-phosphoshikimate + phosphate. It functions in the pathway metabolic intermediate biosynthesis; chorismate biosynthesis; chorismate from D-erythrose 4-phosphate and phosphoenolpyruvate: step 6/7. Its function is as follows. Catalyzes the transfer of the enolpyruvyl moiety of phosphoenolpyruvate (PEP) to the 5-hydroxyl of shikimate-3-phosphate (S3P) to produce enolpyruvyl shikimate-3-phosphate and inorganic phosphate. The protein is 3-phosphoshikimate 1-carboxyvinyltransferase of Thermotoga neapolitana (strain ATCC 49049 / DSM 4359 / NBRC 107923 / NS-E).